The primary structure comprises 89 residues: Probable Fe(2+)-trafficking protein (89 aa).

It belongs to the Fe(2+)-trafficking protein family.

Its function is as follows. Could be a mediator in iron transactions between iron acquisition and iron-requiring processes, such as synthesis and/or repair of Fe-S clusters in biosynthetic enzymes. The protein is Probable Fe(2+)-trafficking protein of Stenotrophomonas maltophilia (strain R551-3).